A 36-amino-acid polypeptide reads, in one-letter code: DNA binding protein ORF8 (36 aa).

Belongs to the microviridae J protein family.

The protein localises to the virion. The protein resides in the host cytoplasm. Functionally, mediates ssDNA packaging into virion, it locates to the internal surface of the capsid. Additionally, plays a role in viral attachment to the host cell. The sequence is that of DNA binding protein ORF8 from Chlamydia phage 1 (Bacteriophage Chp1).